The chain runs to 381 residues: Homoserine O-succinyltransferase (381 aa).

Residues Asn-45–Asp-360 enclose the AB hydrolase-1 domain. Ser-151 serves as the catalytic Nucleophile. Arg-221 contributes to the substrate binding site. Catalysis depends on residues Asp-321 and His-354. Asp-355 serves as a coordination point for substrate.

This sequence belongs to the AB hydrolase superfamily. MetX family. As to quaternary structure, homodimer.

Its subcellular location is the cytoplasm. The catalysed reaction is L-homoserine + succinyl-CoA = O-succinyl-L-homoserine + CoA. It participates in amino-acid biosynthesis; L-methionine biosynthesis via de novo pathway; O-succinyl-L-homoserine from L-homoserine: step 1/1. Functionally, transfers a succinyl group from succinyl-CoA to L-homoserine, forming succinyl-L-homoserine. This Burkholderia vietnamiensis (strain G4 / LMG 22486) (Burkholderia cepacia (strain R1808)) protein is Homoserine O-succinyltransferase.